We begin with the raw amino-acid sequence, 423 residues long: NDP-N-acetyl-D-galactosaminuronic acid dehydrogenase (423 aa).

11 to 28 contributes to the NAD(+) binding site; the sequence is TISVVGLGYIGLPTATVL. The active-site Proton donor/acceptor is the lysine 218. Cysteine 272 acts as the Nucleophile in catalysis.

This sequence belongs to the UDP-glucose/GDP-mannose dehydrogenase family.

In terms of biological role, probably involved in the synthesis of sugar components of EPS I, by converting NDP-N-acetyl-D-galactosamine into NDP-N-acetyl-D-galactosaminuronic acid. The protein is NDP-N-acetyl-D-galactosaminuronic acid dehydrogenase (epsD) of Ralstonia nicotianae (strain ATCC BAA-1114 / GMI1000) (Ralstonia solanacearum).